Consider the following 286-residue polypeptide: 33 kDa chaperonin (286 aa).

Intrachain disulfides connect Cys-225/Cys-227 and Cys-258/Cys-261.

Belongs to the HSP33 family. Under oxidizing conditions two disulfide bonds are formed involving the reactive cysteines. Under reducing conditions zinc is bound to the reactive cysteines and the protein is inactive.

It is found in the cytoplasm. Redox regulated molecular chaperone. Protects both thermally unfolding and oxidatively damaged proteins from irreversible aggregation. Plays an important role in the bacterial defense system toward oxidative stress. The chain is 33 kDa chaperonin from Shewanella sp. (strain ANA-3).